The following is a 335-amino-acid chain: Probable UDP-N-acetylglucosamine pyrophosphorylase (335 aa).

The Substrate binding signature appears at 45–48 (LSGG). Residues 45–48 (LSGG), Lys59, Gln120, and Gly145 each bind UTP. A substrate-binding site is contributed by Asn146. Asp170 contributes to the UTP binding site. The short motif at 218 to 219 (EY) is the Substrate binding element. Residue Lys278 coordinates UTP. Substrate is bound at residue Lys308.

Belongs to the UDPGP type 1 family.

Its subcellular location is the cytoplasm. The catalysed reaction is N-acetyl-alpha-D-glucosamine 1-phosphate + UTP + H(+) = UDP-N-acetyl-alpha-D-glucosamine + diphosphate. The protein operates within nucleotide-sugar biosynthesis; UDP-N-acetyl-alpha-D-glucosamine biosynthesis; UDP-N-acetyl-alpha-D-glucosamine from N-acetyl-alpha-D-glucosamine 1-phosphate: step 1/1. The sequence is that of Probable UDP-N-acetylglucosamine pyrophosphorylase (UAP1) from Encephalitozoon cuniculi (strain GB-M1) (Microsporidian parasite).